The chain runs to 288 residues: 33 kDa chaperonin (288 aa).

2 cysteine pairs are disulfide-bonded: Cys-235-Cys-237 and Cys-268-Cys-271.

Belongs to the HSP33 family. In terms of processing, under oxidizing conditions two disulfide bonds are formed involving the reactive cysteines. Under reducing conditions zinc is bound to the reactive cysteines and the protein is inactive.

Its subcellular location is the cytoplasm. Functionally, redox regulated molecular chaperone. Protects both thermally unfolding and oxidatively damaged proteins from irreversible aggregation. Plays an important role in the bacterial defense system toward oxidative stress. This chain is 33 kDa chaperonin, found in Streptococcus thermophilus (strain CNRZ 1066).